Consider the following 187-residue polypeptide: Photosystem I assembly protein Ycf4 (187 aa).

2 helical membrane-spanning segments follow: residues 25–47 and 62–84; these read YWWASVVLLGASGFLIVGISSYL and FVPQGLVMCFYGSAGILLSIYLW.

It belongs to the Ycf4 family.

The protein localises to the plastid. The protein resides in the chloroplast thylakoid membrane. In terms of biological role, seems to be required for the assembly of the photosystem I complex. The protein is Photosystem I assembly protein Ycf4 of Mesostigma viride (Green alga).